The sequence spans 402 residues: Protein FAM221B (402 aa).

Residues 1–35 show a composition bias toward basic and acidic residues; the sequence is MEAHEIIEEPHITMDAEKHPPSKDPSAEDLQENHI. Disordered regions lie at residues 1–205 and 378–402; these read MEAH…TARP and DTQKTRQRGGRPRGTDTVSNWHRPL. 2 stretches are compositionally biased toward polar residues: residues 77–90 and 393–402; these read EPSISETPSETPTY and DTVSNWHRPL.

The protein belongs to the FAM221 family.

The polypeptide is Protein FAM221B (FAM221B) (Homo sapiens (Human)).